The primary structure comprises 195 residues: Peptidyl-tRNA hydrolase (195 aa).

Position 17 (tyrosine 17) interacts with tRNA. Catalysis depends on histidine 22, which acts as the Proton acceptor. The tRNA site is built by tyrosine 68, asparagine 70, and asparagine 116.

Belongs to the PTH family. As to quaternary structure, monomer.

The protein localises to the cytoplasm. It carries out the reaction an N-acyl-L-alpha-aminoacyl-tRNA + H2O = an N-acyl-L-amino acid + a tRNA + H(+). In terms of biological role, hydrolyzes ribosome-free peptidyl-tRNAs (with 1 or more amino acids incorporated), which drop off the ribosome during protein synthesis, or as a result of ribosome stalling. Its function is as follows. Catalyzes the release of premature peptidyl moieties from peptidyl-tRNA molecules trapped in stalled 50S ribosomal subunits, and thus maintains levels of free tRNAs and 50S ribosomes. This Shewanella baltica (strain OS155 / ATCC BAA-1091) protein is Peptidyl-tRNA hydrolase.